Reading from the N-terminus, the 334-residue chain is Ribosomal RNA small subunit methyltransferase C (334 aa).

Belongs to the methyltransferase superfamily. RsmC family. In terms of assembly, monomer.

Its subcellular location is the cytoplasm. It carries out the reaction guanosine(1207) in 16S rRNA + S-adenosyl-L-methionine = N(2)-methylguanosine(1207) in 16S rRNA + S-adenosyl-L-homocysteine + H(+). Its function is as follows. Specifically methylates the guanine in position 1207 of 16S rRNA in the 30S particle. This Idiomarina loihiensis (strain ATCC BAA-735 / DSM 15497 / L2-TR) protein is Ribosomal RNA small subunit methyltransferase C.